The following is a 299-amino-acid chain: Glycine--tRNA ligase alpha subunit (299 aa).

It belongs to the class-II aminoacyl-tRNA synthetase family. Tetramer of two alpha and two beta subunits.

The protein localises to the cytoplasm. The catalysed reaction is tRNA(Gly) + glycine + ATP = glycyl-tRNA(Gly) + AMP + diphosphate. The polypeptide is Glycine--tRNA ligase alpha subunit (Laribacter hongkongensis (strain HLHK9)).